The sequence spans 262 residues: Ornithine carbamoyltransferase (262 aa).

Carbamoyl phosphate is bound by residues 3–7, Gln30, Arg54, and 81–84; these read STRTR and HPTQ. Residues Asn114, Asp178, and 182-183 each bind L-ornithine; that span reads SM. Carbamoyl phosphate-binding positions include 219 to 222 and Thr247; that span reads HCLP.

It belongs to the aspartate/ornithine carbamoyltransferase superfamily. OTCase family.

The protein localises to the cytoplasm. It carries out the reaction carbamoyl phosphate + L-ornithine = L-citrulline + phosphate + H(+). It functions in the pathway amino-acid biosynthesis; L-arginine biosynthesis; L-arginine from L-ornithine and carbamoyl phosphate: step 1/3. Functionally, reversibly catalyzes the transfer of the carbamoyl group from carbamoyl phosphate (CP) to the N(epsilon) atom of ornithine (ORN) to produce L-citrulline. The sequence is that of Ornithine carbamoyltransferase (argF) from Neisseria polysaccharea.